The following is a 243-amino-acid chain: UPF0758 protein MAE_44350 (243 aa).

The 123-residue stretch at 113-235 (VIDSPDTAAA…FQSLRQITDL (123 aa)) folds into the MPN domain. Residues H184, H186, and D197 each coordinate Zn(2+). The JAMM motif signature appears at 184–197 (HNHPTGSLVPSQDD).

This sequence belongs to the UPF0758 family.

This chain is UPF0758 protein MAE_44350, found in Microcystis aeruginosa (strain NIES-843 / IAM M-2473).